The following is a 468-amino-acid chain: Chromosomal replication initiator protein DnaA (468 aa).

The interval 1–90 is domain I, interacts with DnaA modulators; it reads MTQEKWGLLC…NSPMRPARAA (90 aa). Residues 91–126 form a domain II region; that stretch reads RPAAAAAAAAAAVEAPQVSAPRATDTSDVLDGLQAA. A domain III, AAA+ region region spans residues 127–348; sequence PLDPRFTFDS…GALTRLFAFA (222 aa). 4 residues coordinate ATP: glycine 171, glycine 173, lysine 174, and threonine 175. The tract at residues 349 to 468 is domain IV, binds dsDNA; that stretch reads SLVGREIDME…VEMLRRALEA (120 aa).

Belongs to the DnaA family. In terms of assembly, oligomerizes as a right-handed, spiral filament on DNA at oriC.

The protein localises to the cytoplasm. Plays an essential role in the initiation and regulation of chromosomal replication. ATP-DnaA binds to the origin of replication (oriC) to initiate formation of the DNA replication initiation complex once per cell cycle. Binds the DnaA box (a 9 base pair repeat at the origin) and separates the double-stranded (ds)DNA. Forms a right-handed helical filament on oriC DNA; dsDNA binds to the exterior of the filament while single-stranded (ss)DNA is stabiized in the filament's interior. The ATP-DnaA-oriC complex binds and stabilizes one strand of the AT-rich DNA unwinding element (DUE), permitting loading of DNA polymerase. After initiation quickly degrades to an ADP-DnaA complex that is not apt for DNA replication. Binds acidic phospholipids. This is Chromosomal replication initiator protein DnaA from Ruegeria pomeroyi (strain ATCC 700808 / DSM 15171 / DSS-3) (Silicibacter pomeroyi).